The chain runs to 874 residues: MAKWVYKFEEGNASMRNLLGGKGCNLAEMTILGMPIPQGFTVTTEACTEYYNSGKQITQEIQDQIFEAITWLEELNGKKFGDTEDPLLVSVRSGARASMPGMMDTILNLGLNDVAVEGFAKKTGNPRFAYDSYRRFIQMYSDVVMEVPKSHFEKIIDAMKEEKGVHFDTDLTADDLKELAEKFKAVYKEAMNGEEFPQEPKDQLMGAVKAVFRSWDNPRAIVYRRMNDIPGDWGTAVNVQTMVFGNKGETSGTGVAFTRNPSTGEKGIYGEYLINAQGEDVVAGVRTPQPITQLENDMPDCYKQFMDLAMKLEKHFRDMQDMEFTIEEGKLYFLQTRNGKRTAPAALQIACDLVDEGMITEEEAVVRIEAKSLDQLLHPTFNPAALKAGEVIGSALPASPGAAAGKVYFTADEAKAAHEKGERVILVRLETSPEDIEGMHAAEGILTVRGGMTSHAAVVARGMGTCCVSGCGEIKINEEAKTFELGGHTFAEGDYISLDGSTGKIYKGDIETQEASVSGSFERIMVWADKFRTLKVRTNADTPEDTLNAVKLGAEGIGLCRTEHMFFEADRIMKIRKMILSDSVEAREEALNELIPFQKGDFKAMYKALEGRPMTVRYLDPPLHEFVPHTEEEQAELAKNMGLTLAEVKAKVDELHEFNPMMGHRGCRLAVTYPEIAKMQTRAVMEAAIEVKEETGIDIVPEIMIPLVGEKKELKFVKDVVVEVAEQVKKEKGSDMQYHIGTMIEIPRAALTADAIAEEAEFFSFGTNDLTQMTFGFSRDDAGKFLDSYYKAKIYESDPFARLDQTGVGQLVEMAVKKGRQTRPGLKCGICGEHGGDPSSVEFCHKVGLNYVSCSPFRVPIARLAAAQAALNNK.

Residues 2-340 form an N-terminal region; sequence AKWVYKFEEG…LYFLQTRNGK (339 aa). R92 provides a ligand contact to ATP. The interval 340–399 is linker 1; it reads KRTAPAALQIACDLVDEGMITEEEAVVRIEAKSLDQLLHPTFNPAALKAGEVIGSALPAS. Residues 400 to 498 are central; sequence PGAAAGKVYF…TFAEGDYISL (99 aa). Residue T453 is modified to Phosphothreonine; by PDRP1. Catalysis depends on H455, which acts as the Tele-phosphohistidine intermediate. The linker 2 stretch occupies residues 499–533; the sequence is DGSTGKIYKGDIETQEASVSGSFERIMVWADKFRT. Residues 534-874 are C-terminal; the sequence is LKVRTNADTP…AAAQAALNNK (341 aa). Residues R561, R617, E745, G766, T767, N768, and D769 each contribute to the substrate site. E745 serves as a coordination point for Mg(2+). A Mg(2+)-binding site is contributed by D769. The active-site Proton donor is the C831.

This sequence belongs to the PEP-utilizing enzyme family. In terms of assembly, homodimer. Mg(2+) is required as a cofactor. In terms of processing, phosphorylation of Thr-453 in the dark inactivates the enzyme. Dephosphorylation upon light stimulation reactivates the enzyme.

It catalyses the reaction pyruvate + phosphate + ATP = phosphoenolpyruvate + AMP + diphosphate + H(+). Activated by light-induced dephosphorylation. Inhibited by dark-induced phosphorylation. Both reactions are catalyzed by PDRP1. Its function is as follows. Catalyzes the reversible phosphorylation of pyruvate and phosphate. In E.histolytica and C.symbiosus, PPDK functions in the direction of ATP synthesis. In Clostridium symbiosum (Bacteroides symbiosus), this protein is Pyruvate, phosphate dikinase (ppdK).